The primary structure comprises 637 residues: Nuclear receptor subfamily 2 group C member 1-B (637 aa).

Residues 149 to 224 (VELCVVCGDK…LGMKQDSVQC (76 aa)) constitute a DNA-binding region (nuclear receptor). 2 consecutive NR C4-type zinc fingers follow at residues 152 to 172 (CVVCGDKASGRHYGAVTCEGC) and 188 to 207 (CRGSKDCVINKHYRNRCQYC). Residues 383–624 (CVGSGSNLLP…SIIPYILRME (242 aa)) enclose the NR LBD domain.

It belongs to the nuclear hormone receptor family. NR2 subfamily.

Its subcellular location is the nucleus. In terms of biological role, orphan nuclear receptor. Binds the IR7 element in the promoter of its own gene in an autoregulatory negative feedback mechanism. Primarily repressor of a broad range of genes. Binds to hormone response elements (HREs) consisting of two 5'-AGGTCA-3' half site direct repeat consensus sequences. The protein is Nuclear receptor subfamily 2 group C member 1-B (nr2c1-b) of Xenopus laevis (African clawed frog).